A 538-amino-acid polypeptide reads, in one-letter code: Tryptophan 7-halogenase PrnA (538 aa).

8 residues coordinate FAD: Gly-13, Thr-15, Ala-16, Ser-39, Ile-42, Ile-45, Glu-49, and Ala-50. Residue Lys-79 is part of the active site. Lys-79 contacts 7-chloro-L-tryptophan. The FAD site is built by Val-187 and Leu-337. Glu-346 contributes to the 7-chloro-L-tryptophan binding site. Glu-346 contacts L-tryptophan. Residues Thr-348 and Gly-349 each contribute to the chloride site. Ile-350 contributes to the FAD binding site. 7-chloro-L-tryptophan is bound by residues Tyr-443, Tyr-444, Glu-450, and Phe-454. L-tryptophan contacts are provided by Tyr-443, Tyr-444, Glu-450, and Phe-454.

The protein belongs to the flavin-dependent halogenase family. Bacterial tryptophan halogenase subfamily. Homodimer.

The enzyme catalyses L-tryptophan + FADH2 + chloride + O2 = 7-chloro-L-tryptophan + FAD + 2 H2O. The protein operates within antibiotic biosynthesis. In terms of biological role, involved in the biosynthesis of the antifungal antibiotic pyrrolnitrin. Catalyzes the chlorination of tryptophan (Trp) at C7 position to yield 7-chloro-L-tryptophan (7-CLT). This is Tryptophan 7-halogenase PrnA from Pseudomonas fluorescens.